The following is a 443-amino-acid chain: Probable serine transporter (443 aa).

Topologically, residues 1 to 48 (MEIASNKGVIADASTPAGRAGMSESEWREAIKFDSTDTGWVIMSIGMA) are cytoplasmic. A helical membrane pass occupies residues 49–69 (IGAGIVFLPVQVGLMGLWVFL). At 70-110 (LSSVIGYPAMYLFQRLFINTLAESPECKDYPSVISGYLGKN) the chain is on the periplasmic side. Residues 111–131 (WGILLGALYFVMLVIWMFVYS) traverse the membrane as a helical segment. The Cytoplasmic portion of the chain corresponds to 132-149 (TAITNDSASYLHTFGVTE). A helical transmembrane segment spans residues 150–170 (GLLSDSPFYGLVLICILVAIS). Residues 171 to 182 (SRGEKLLFKIST) lie on the Periplasmic side of the membrane. The chain crosses the membrane as a helical span at residues 183 to 203 (GMVLTKLLVVAALGVSMVGMW). Residues 204–214 (HLYNVGSLPPL) lie on the Cytoplasmic side of the membrane. Residues 215-235 (GLLVKNAIITLPFTLTSILFI) form a helical membrane-spanning segment. Residues 236-264 (QTLSPMVISYRSREKSIEVARHKALRAMN) lie on the Periplasmic side of the membrane. Residues 265 to 285 (IAFGILFVTVFFYAVSFTLAM) traverse the membrane as a helical segment. Over 286–297 (GHDEAVKAYEQN) the chain is Cytoplasmic. 2 helical membrane-spanning segments follow: residues 298–318 (ISALAIAAQFISGDGAAWVKV) and 319–339 (VSVILNIFAVMTAFFGVYLGF). Residues 340–367 (REATQGIVMNILRRKMPAEKINENLVQR) are Cytoplasmic-facing. A helical membrane pass occupies residues 368–388 (GIMIFAILLAWSAIVLNAPVL). A topological domain (periplasmic) is located at residue S389. A helical membrane pass occupies residues 390–410 (FTSICSPIFGMVGCLIPAWLV). Residues 411–421 (YKVPALHKYKG) are Cytoplasmic-facing. Residues 422–442 (MSLYLIIVTGLLLCVSPFLAF) traverse the membrane as a helical segment. A topological domain (periplasmic) is located at residue S443.

This sequence belongs to the amino acid/polyamine transporter 2 family. SdaC/TdcC subfamily.

Its subcellular location is the cell inner membrane. Functionally, plays a role in L-cysteine detoxification. May transport both D- and L-serine. This is Probable serine transporter (dlsT) from Escherichia coli (strain K12).